The primary structure comprises 103 residues: DNA-directed RNA polymerase subunit omega (103 aa).

Positions 52 to 103 (EIESGNVTIHPDPEGKREAVRRRIEEEKRRKEEEEKKIKEQIAKEKEDGEKI) are disordered. Over residues 62 to 103 (PDPEGKREAVRRRIEEEKRRKEEEEKKIKEQIAKEKEDGEKI) the composition is skewed to basic and acidic residues.

It belongs to the RNA polymerase subunit omega family. As to quaternary structure, the RNAP catalytic core consists of 2 alpha, 1 beta, 1 beta' and 1 omega subunit. When a sigma factor is associated with the core the holoenzyme is formed, which can initiate transcription.

It carries out the reaction RNA(n) + a ribonucleoside 5'-triphosphate = RNA(n+1) + diphosphate. Functionally, promotes RNA polymerase assembly. Latches the N- and C-terminal regions of the beta' subunit thereby facilitating its interaction with the beta and alpha subunits. This chain is DNA-directed RNA polymerase subunit omega, found in Streptococcus pneumoniae serotype 19F (strain G54).